We begin with the raw amino-acid sequence, 294 residues long: Elongation factor Ts (294 aa).

Residues 81 to 84 (TDFV) are involved in Mg(2+) ion dislocation from EF-Tu.

The protein belongs to the EF-Ts family.

The protein resides in the cytoplasm. Associates with the EF-Tu.GDP complex and induces the exchange of GDP to GTP. It remains bound to the aminoacyl-tRNA.EF-Tu.GTP complex up to the GTP hydrolysis stage on the ribosome. The polypeptide is Elongation factor Ts (tsf) (Mycoplasmopsis pulmonis (strain UAB CTIP) (Mycoplasma pulmonis)).